The primary structure comprises 297 residues: Cell death peptidase (297 aa).

A run of 2 helical transmembrane segments spans residues 61 to 82 (IVLT…WVFT) and 149 to 178 (IFLC…AFST).

This sequence belongs to the peptidase U49 family.

It is found in the cell membrane. In terms of biological role, interacts with a short DNA sequence about one-quarter of the way into the major capsid protein gene 23 of T4; general translation inhibition occurs when this late gene of the virus is expressed. This is Cell death peptidase (lit) from Escherichia coli (strain K12).